The chain runs to 369 residues: tRNA/tmRNA (uracil-C(5))-methyltransferase (369 aa).

Residues Q193, Y221, N226, E242, and D302 each contribute to the S-adenosyl-L-methionine site. C327 (nucleophile) is an active-site residue. Catalysis depends on E361, which acts as the Proton acceptor.

The protein belongs to the class I-like SAM-binding methyltransferase superfamily. RNA M5U methyltransferase family. TrmA subfamily.

It catalyses the reaction uridine(54) in tRNA + S-adenosyl-L-methionine = 5-methyluridine(54) in tRNA + S-adenosyl-L-homocysteine + H(+). The enzyme catalyses uridine(341) in tmRNA + S-adenosyl-L-methionine = 5-methyluridine(341) in tmRNA + S-adenosyl-L-homocysteine + H(+). Dual-specificity methyltransferase that catalyzes the formation of 5-methyluridine at position 54 (m5U54) in all tRNAs, and that of position 341 (m5U341) in tmRNA (transfer-mRNA). This is tRNA/tmRNA (uracil-C(5))-methyltransferase from Sulfurimonas denitrificans (strain ATCC 33889 / DSM 1251) (Thiomicrospira denitrificans (strain ATCC 33889 / DSM 1251)).